The following is a 385-amino-acid chain: Bifunctional chorismate mutase/prephenate dehydratase (385 aa).

A Chorismate mutase domain is found at 1-92; sequence MPSKNDLLSF…ESVLTQKKLL (92 aa). Substrate-binding residues include R11, R28, K39, D48, E52, S84, and Q88. In terms of domain architecture, Prephenate dehydratase spans 105–285; it reads SFSFLGPKGS…NITRFILLSR (181 aa). The regulatory stretch occupies residues 286–385; it reads KPVSISSKIP…PSENITPIIP (100 aa). Residues 299–376 enclose the ACT domain; the sequence is TLIFNTGQES…KFIKILGCYP (78 aa).

The protein resides in the cytoplasm. It carries out the reaction chorismate = prephenate. The catalysed reaction is prephenate + H(+) = 3-phenylpyruvate + CO2 + H2O. It participates in amino-acid biosynthesis; L-phenylalanine biosynthesis; phenylpyruvate from prephenate: step 1/1. Its pathway is metabolic intermediate biosynthesis; prephenate biosynthesis; prephenate from chorismate: step 1/1. Functionally, catalyzes the Claisen rearrangement of chorismate to prephenate and the decarboxylation/dehydration of prephenate to phenylpyruvate. This Buchnera aphidicola subsp. Schizaphis graminum (strain Sg) protein is Bifunctional chorismate mutase/prephenate dehydratase (pheA).